The chain runs to 165 residues: Pro-MCH (165 aa).

A signal peptide spans 1–21 (MAKMTLSSYMLMLAFSLFSQG). The segment at 66-89 (YKNDESGFMNDDDNKNSKNTGSKQ) is disordered. I143 is modified (isoleucine amide). A disulfide bridge connects residues C153 and C162.

The protein belongs to the MCH family. Post-translationally, pro-MCH is processed differentially in the brain and in peripheral organs producing two neuropeptides; NEI and MCH. A third peptide, NGE, may also be produced. Preferential processing in neurons by prohormone convertase 2 (PC2) generates NEI. MCH is generated in neurons of the lateral hypothalmic area by several prohormone convertases including PC1/3, PC2 and PC5/6. As to expression, predominantly expressed in hypothalamus. Also found in heart, intestine, spleen and testis (spermatogonia, early spermatocytes and Sertoli cells). In brain only mature MCH and NEI peptides are present. In peripheral tissues a large product, encompassing the NEI and MCH domains of the precursor, is found predominantly.

The protein localises to the secreted. In terms of biological role, MCH may act as a neurotransmitter or neuromodulator in a broad array of neuronal functions directed toward the regulation of goal-directed behavior, such as food intake, and general arousal. The protein is Pro-MCH (Pmch) of Mus musculus (Mouse).